Reading from the N-terminus, the 717-residue chain is Polyribonucleotide nucleotidyltransferase (717 aa).

D486 and D492 together coordinate Mg(2+). The KH domain maps to 553 to 612 (PRMITVKINPEKIRDVIGKGGSTIQALTKETGCTIDIQEDGTITIASTSSEGMAEAKRRI). Positions 622–690 (GKIYSGTVLK…EKGRMRLSIK (69 aa)) constitute an S1 motif domain. Positions 690–717 (KAAKAEEGDVPATAPQAPGAGDATSQQQ) are disordered.

Belongs to the polyribonucleotide nucleotidyltransferase family. The cofactor is Mg(2+).

It is found in the cytoplasm. The enzyme catalyses RNA(n+1) + phosphate = RNA(n) + a ribonucleoside 5'-diphosphate. In terms of biological role, involved in mRNA degradation. Catalyzes the phosphorolysis of single-stranded polyribonucleotides processively in the 3'- to 5'-direction. This chain is Polyribonucleotide nucleotidyltransferase, found in Ralstonia nicotianae (strain ATCC BAA-1114 / GMI1000) (Ralstonia solanacearum).